The sequence spans 793 residues: Protein zer-1 homolog (793 aa).

3 LRR repeats span residues 84-108, 187-210, and 269-294; these read RTSL…LMRH, LHDL…ALGS, and LRHL…ESTT.

This sequence belongs to the zyg-11 family.

Functionally, serves as substrate adapter subunit in an E3 ubiquitin ligase complex CG12084-cul-2-elongin BC. Targets substrates bearing N-terminal glycine degrons for proteasomal degradation. This is Protein zer-1 homolog from Drosophila melanogaster (Fruit fly).